The chain runs to 239 residues: Riboflavin synthase (239 aa).

Lumazine-binding repeat units lie at residues 1 to 105 (MFTG…MGGH) and 106 to 205 (VVQG…EKQI). Residues 4–6 (GLV), 54–56 (CLT), 70–75 (GISPET), 109–111 (GHV), K145, 154–156 (SLT), and 170–175 (SMVSYT) contribute to the 2,4-dihydroxypteridine site.

Homotrimer.

It carries out the reaction 2 6,7-dimethyl-8-(1-D-ribityl)lumazine + H(+) = 5-amino-6-(D-ribitylamino)uracil + riboflavin. It participates in cofactor biosynthesis; riboflavin biosynthesis; riboflavin from 2-hydroxy-3-oxobutyl phosphate and 5-amino-6-(D-ribitylamino)uracil: step 2/2. Catalyzes the dismutation of two molecules of 6,7-dimethyl-8-ribityllumazine, resulting in the formation of riboflavin and 5-amino-6-(D-ribitylamino)uracil. The protein is Riboflavin synthase (RIB5) of Meyerozyma guilliermondii (strain ATCC 6260 / CBS 566 / DSM 6381 / JCM 1539 / NBRC 10279 / NRRL Y-324) (Yeast).